The chain runs to 329 residues: tRNA uridine(34) hydroxylase (329 aa).

The Rhodanese domain maps to 123–217 (SDPDVILVDT…YLEEVPEEES (95 aa)). Catalysis depends on C177, which acts as the Cysteine persulfide intermediate. The segment at 285–329 (REKQVQLSNARGETHVGGDAAHLIDQRKKEKLAHKEQQRSGKKAK) is disordered. Basic and acidic residues predominate over residues 296-323 (GETHVGGDAAHLIDQRKKEKLAHKEQQR).

It belongs to the TrhO family.

It carries out the reaction uridine(34) in tRNA + AH2 + O2 = 5-hydroxyuridine(34) in tRNA + A + H2O. Catalyzes oxygen-dependent 5-hydroxyuridine (ho5U) modification at position 34 in tRNAs. In Vibrio atlanticus (strain LGP32) (Vibrio splendidus (strain Mel32)), this protein is tRNA uridine(34) hydroxylase.